A 103-amino-acid chain; its full sequence is Small ribosomal subunit protein uS10 (103 aa).

Belongs to the universal ribosomal protein uS10 family. Part of the 30S ribosomal subunit.

Functionally, involved in the binding of tRNA to the ribosomes. The protein is Small ribosomal subunit protein uS10 of Pseudomonas aeruginosa (strain LESB58).